A 254-amino-acid polypeptide reads, in one-letter code: Methylthioribulose-1-phosphate dehydratase (254 aa).

Cys110 is a binding site for substrate. His127 and His129 together coordinate Zn(2+). Glu156 serves as the catalytic Proton donor/acceptor. A Zn(2+)-binding site is contributed by His212.

This sequence belongs to the aldolase class II family. MtnB subfamily. Requires Zn(2+) as cofactor.

The protein localises to the cytoplasm. It catalyses the reaction 5-(methylsulfanyl)-D-ribulose 1-phosphate = 5-methylsulfanyl-2,3-dioxopentyl phosphate + H2O. The protein operates within amino-acid biosynthesis; L-methionine biosynthesis via salvage pathway; L-methionine from S-methyl-5-thio-alpha-D-ribose 1-phosphate: step 2/6. Catalyzes the dehydration of methylthioribulose-1-phosphate (MTRu-1-P) into 2,3-diketo-5-methylthiopentyl-1-phosphate (DK-MTP-1-P). This chain is Methylthioribulose-1-phosphate dehydratase, found in Talaromyces marneffei (strain ATCC 18224 / CBS 334.59 / QM 7333) (Penicillium marneffei).